Here is a 308-residue protein sequence, read N- to C-terminus: Ribosomal RNA small subunit methyltransferase H (308 aa).

S-adenosyl-L-methionine contacts are provided by residues 34 to 36, aspartate 54, phenylalanine 80, aspartate 101, and glutamine 108; that span reads GGH.

The protein belongs to the methyltransferase superfamily. RsmH family.

The protein resides in the cytoplasm. The enzyme catalyses cytidine(1402) in 16S rRNA + S-adenosyl-L-methionine = N(4)-methylcytidine(1402) in 16S rRNA + S-adenosyl-L-homocysteine + H(+). Its function is as follows. Specifically methylates the N4 position of cytidine in position 1402 (C1402) of 16S rRNA. This chain is Ribosomal RNA small subunit methyltransferase H, found in Ureaplasma parvum serovar 3 (strain ATCC 27815 / 27 / NCTC 11736).